A 447-amino-acid chain; its full sequence is UDP-N-acetylmuramoylalanine--D-glutamate ligase (447 aa).

112–118 (GTNGKST) serves as a coordination point for ATP.

It belongs to the MurCDEF family.

The protein resides in the cytoplasm. The catalysed reaction is UDP-N-acetyl-alpha-D-muramoyl-L-alanine + D-glutamate + ATP = UDP-N-acetyl-alpha-D-muramoyl-L-alanyl-D-glutamate + ADP + phosphate + H(+). The protein operates within cell wall biogenesis; peptidoglycan biosynthesis. Cell wall formation. Catalyzes the addition of glutamate to the nucleotide precursor UDP-N-acetylmuramoyl-L-alanine (UMA). The chain is UDP-N-acetylmuramoylalanine--D-glutamate ligase from Legionella pneumophila (strain Paris).